The chain runs to 209 residues: Outer-membrane lipoprotein LolB (209 aa).

The N-terminal stretch at 1 to 21 is a signal peptide; it reads MNNMKTFKFLTALFATAILTA. The N-palmitoyl cysteine moiety is linked to residue Cys-22. Cys-22 carries the S-diacylglycerol cysteine lipid modification.

Belongs to the LolB family. In terms of assembly, monomer.

Its subcellular location is the cell outer membrane. In terms of biological role, plays a critical role in the incorporation of lipoproteins in the outer membrane after they are released by the LolA protein. This chain is Outer-membrane lipoprotein LolB, found in Haemophilus influenzae (strain 86-028NP).